Reading from the N-terminus, the 155-residue chain is Small ribosomal subunit protein uS9 (155 aa).

It belongs to the universal ribosomal protein uS9 family.

The chain is Small ribosomal subunit protein uS9 from Sinorhizobium fredii (strain NBRC 101917 / NGR234).